The sequence spans 256 residues: Small ribosomal subunit protein uS2 (256 aa).

Belongs to the universal ribosomal protein uS2 family.

The polypeptide is Small ribosomal subunit protein uS2 (Brucella melitensis biotype 1 (strain ATCC 23456 / CCUG 17765 / NCTC 10094 / 16M)).